A 150-amino-acid polypeptide reads, in one-letter code: Protein Smg homolog (150 aa).

Belongs to the Smg family.

This is Protein Smg homolog from Leptothrix cholodnii (strain ATCC 51168 / LMG 8142 / SP-6) (Leptothrix discophora (strain SP-6)).